We begin with the raw amino-acid sequence, 115 residues long: Hydrogenase maturation factor HypA (115 aa).

Histidine 2 is a binding site for Ni(2+). Zn(2+)-binding residues include cysteine 73, cysteine 76, cysteine 89, and cysteine 92.

The protein belongs to the HypA/HybF family.

Involved in the maturation of [NiFe] hydrogenases. Required for nickel insertion into the metal center of the hydrogenase. In Polaromonas naphthalenivorans (strain CJ2), this protein is Hydrogenase maturation factor HypA.